Reading from the N-terminus, the 215-residue chain is Guanylate kinase (215 aa).

The Guanylate kinase-like domain maps to 11–189; that stretch reads GNVFMVVAPS…ALTELVQIIS (179 aa). 18-25 serves as a coordination point for ATP; sequence APSGAGKS.

It belongs to the guanylate kinase family.

Its subcellular location is the cytoplasm. The catalysed reaction is GMP + ATP = GDP + ADP. In terms of biological role, essential for recycling GMP and indirectly, cGMP. The polypeptide is Guanylate kinase (Bordetella bronchiseptica (strain ATCC BAA-588 / NCTC 13252 / RB50) (Alcaligenes bronchisepticus)).